Consider the following 430-residue polypeptide: 3-phosphoshikimate 1-carboxyvinyltransferase (430 aa).

3-phosphoshikimate contacts are provided by Lys20, Ser21, and Arg25. Residue Lys20 coordinates phosphoenolpyruvate. Phosphoenolpyruvate contacts are provided by Gly92 and Arg120. Ser166, Gln168, Asp312, and Lys339 together coordinate 3-phosphoshikimate. Gln168 contacts phosphoenolpyruvate. Asp312 (proton acceptor) is an active-site residue. Arg343 and Arg387 together coordinate phosphoenolpyruvate.

It belongs to the EPSP synthase family. In terms of assembly, monomer.

The protein localises to the cytoplasm. The catalysed reaction is 3-phosphoshikimate + phosphoenolpyruvate = 5-O-(1-carboxyvinyl)-3-phosphoshikimate + phosphate. Its pathway is metabolic intermediate biosynthesis; chorismate biosynthesis; chorismate from D-erythrose 4-phosphate and phosphoenolpyruvate: step 6/7. Its function is as follows. Catalyzes the transfer of the enolpyruvyl moiety of phosphoenolpyruvate (PEP) to the 5-hydroxyl of shikimate-3-phosphate (S3P) to produce enolpyruvyl shikimate-3-phosphate and inorganic phosphate. The chain is 3-phosphoshikimate 1-carboxyvinyltransferase from Lactococcus lactis subsp. cremoris (strain MG1363).